A 306-amino-acid chain; its full sequence is Ribonuclease Z (306 aa).

Zn(2+) is bound by residues His63, His65, Asp67, His68, His140, Asp211, and His269. Asp67 functions as the Proton acceptor in the catalytic mechanism.

It belongs to the RNase Z family. Homodimer. The cofactor is Zn(2+).

It carries out the reaction Endonucleolytic cleavage of RNA, removing extra 3' nucleotides from tRNA precursor, generating 3' termini of tRNAs. A 3'-hydroxy group is left at the tRNA terminus and a 5'-phosphoryl group is left at the trailer molecule.. Its function is as follows. Zinc phosphodiesterase, which displays some tRNA 3'-processing endonuclease activity. Probably involved in tRNA maturation, by removing a 3'-trailer from precursor tRNA. The sequence is that of Ribonuclease Z from Listeria monocytogenes serotype 4b (strain CLIP80459).